We begin with the raw amino-acid sequence, 65 residues long: Photosystem II reaction center protein H (65 aa).

A helical transmembrane segment spans residues 27 to 47; the sequence is GAVPVMAFIGVLLLVFLVIML.

This sequence belongs to the PsbH family. PSII is composed of 1 copy each of membrane proteins PsbA, PsbB, PsbC, PsbD, PsbE, PsbF, PsbH, PsbI, PsbJ, PsbK, PsbL, PsbM, PsbT, PsbX, PsbY, Psb30/Ycf12, peripheral proteins PsbO, CyanoQ (PsbQ), PsbU, PsbV and a large number of cofactors. It forms dimeric complexes.

The protein resides in the cellular thylakoid membrane. Functionally, one of the components of the core complex of photosystem II (PSII), required for its stability and/or assembly. PSII is a light-driven water:plastoquinone oxidoreductase that uses light energy to abstract electrons from H(2)O, generating O(2) and a proton gradient subsequently used for ATP formation. It consists of a core antenna complex that captures photons, and an electron transfer chain that converts photonic excitation into a charge separation. The protein is Photosystem II reaction center protein H of Prochlorococcus marinus (strain NATL1A).